Consider the following 254-residue polypeptide: Thiazole synthase (254 aa).

Lys95 functions as the Schiff-base intermediate with DXP in the catalytic mechanism. 1-deoxy-D-xylulose 5-phosphate-binding positions include Gly156, 182–183, and 204–205; these read AG and NT.

It belongs to the ThiG family. Homotetramer. Forms heterodimers with either ThiH or ThiS.

The protein localises to the cytoplasm. The catalysed reaction is [ThiS sulfur-carrier protein]-C-terminal-Gly-aminoethanethioate + 2-iminoacetate + 1-deoxy-D-xylulose 5-phosphate = [ThiS sulfur-carrier protein]-C-terminal Gly-Gly + 2-[(2R,5Z)-2-carboxy-4-methylthiazol-5(2H)-ylidene]ethyl phosphate + 2 H2O + H(+). The protein operates within cofactor biosynthesis; thiamine diphosphate biosynthesis. In terms of biological role, catalyzes the rearrangement of 1-deoxy-D-xylulose 5-phosphate (DXP) to produce the thiazole phosphate moiety of thiamine. Sulfur is provided by the thiocarboxylate moiety of the carrier protein ThiS. In vitro, sulfur can be provided by H(2)S. This is Thiazole synthase from Shewanella baltica (strain OS195).